The primary structure comprises 80 residues: uncharacterized protein (80 aa).

Functionally, essential for virus function. This is an uncharacterized protein from Sulfolobus spindle-shape virus 1 (SSV1).